The chain runs to 232 residues: Ribose-5-phosphate isomerase A (232 aa).

Substrate is bound by residues 28-31 (TGST), 83-86 (DGAD), and 96-99 (KGGG). Catalysis depends on Glu-105, which acts as the Proton acceptor. Position 123 (Lys-123) interacts with substrate.

It belongs to the ribose 5-phosphate isomerase family. In terms of assembly, homodimer.

The catalysed reaction is aldehydo-D-ribose 5-phosphate = D-ribulose 5-phosphate. Its pathway is carbohydrate degradation; pentose phosphate pathway; D-ribose 5-phosphate from D-ribulose 5-phosphate (non-oxidative stage): step 1/1. In terms of biological role, catalyzes the reversible conversion of ribose-5-phosphate to ribulose 5-phosphate. The sequence is that of Ribose-5-phosphate isomerase A from Rhodopseudomonas palustris (strain BisB18).